A 375-amino-acid chain; its full sequence is Filamin-binding LIM protein 1 (375 aa).

Positions M1–A70 are filamin-binding. Disordered stretches follow at residues W43–E119 and H137–V176. 2 stretches are compositionally biased toward pro residues: residues F104–L114 and P140–A149. Low complexity predominate over residues P150–S159. 3 consecutive LIM zinc-binding domains span residues D183–R244, C245–A302, and P303–A372. The segment at I278–C375 is FERMT2-binding.

Interacts with FERMT2, FLNA, FLNB and FLNC. Interacts with NKX2-5.

The protein localises to the cell junction. Its subcellular location is the focal adhesion. The protein resides in the cytoplasm. It is found in the cytoskeleton. It localises to the stress fiber. Its function is as follows. Serves as an anchoring site for cell-ECM adhesion proteins and filamin-containing actin filaments. Is implicated in cell shape modulation (spreading) and motility. May participate in the regulation of filamin-mediated cross-linking and stabilization of actin filaments. May also regulate the assembly of filamin-containing signaling complexes that control actin assembly. Promotes dissociation of FLNA from ITGB3 and ITGB7. Promotes activation of integrins and regulates integrin-mediated cell-cell adhesion. The protein is Filamin-binding LIM protein 1 (FBLIM1) of Pongo abelii (Sumatran orangutan).